Here is a 574-residue protein sequence, read N- to C-terminus: Pre-mRNA-processing protein 45 (574 aa).

Disordered regions lie at residues 1–46 (MAAL…WKPK), 203–234 (PPRFKHKKIPRGPAEPPPPVLQSPPRAATAQD), 350–406 (ETGI…SEMR), 478–503 (AGSSRNDESFGGGTEEGIKEEMSKDR), and 549–574 (MDAARRGGKRTAEDRDEERRKRARDE). 2 stretches are compositionally biased toward pro residues: residues 24-33 (APLPTTPGPQ) and 215-224 (PAEPPPPVLQ). A compositionally biased stretch (acidic residues) spans 363–377 (GSEEESDEEEEDEEA). 3 stretches are compositionally biased toward basic and acidic residues: residues 378–397 (IRERNIVREEKRREREKEMR), 493–503 (EGIKEEMSKDR), and 558–574 (RTAEDRDEERRKRARDE).

Belongs to the SNW family. Associated with the spliceosome.

The protein localises to the nucleus. In terms of biological role, involved in pre-mRNA splicing. The chain is Pre-mRNA-processing protein 45 (PRP45) from Cryptococcus neoformans var. neoformans serotype D (strain JEC21 / ATCC MYA-565) (Filobasidiella neoformans).